Here is a 66-residue protein sequence, read N- to C-terminus: Large ribosomal subunit protein bL33 (66 aa).

It belongs to the bacterial ribosomal protein bL33 family.

This is Large ribosomal subunit protein bL33 from Wolbachia sp. subsp. Brugia malayi (strain TRS).